A 126-amino-acid polypeptide reads, in one-letter code: Calcitonin receptor-stimulating peptide 1 (126 aa).

A signal peptide spans 1–25 (MGFWKFPPFLVLSILVLYQAGMFHT). The propeptide occupies 26–78 (APMRSAFGSPFDPATLSEEESRLLLAAMVNDYEQMKAREMQKQRAQGSGISVQ). Cys82 and Cys87 are oxidised to a cystine. Gly118 carries the post-translational modification Glycine amide. Residues 123–126 (NFWI) constitute a propeptide that is removed on maturation.

In terms of tissue distribution, mainly expressed in the thyroid gland and CNS. Found in the nerve cells of cerebrum, hippocampus, hypothalamus, pons/midbrain and thalamus.

The protein resides in the secreted. Stimulates cAMP production in porcine kidney cell line LLC-PK1 via the calcitonin receptor (CT) but not via the CT-like (CL) receptor. This chain is Calcitonin receptor-stimulating peptide 1 (CRSP1), found in Sus scrofa (Pig).